A 375-amino-acid chain; its full sequence is Glutamate 5-kinase (375 aa).

Residue K17 coordinates ATP. Substrate contacts are provided by S58, D145, and N157. Residues 177-178 (SD) and 219-225 (TGGMVTK) contribute to the ATP site. Residues 281–359 (QGALTLDDGA…RELARELGPA (79 aa)) enclose the PUA domain.

It belongs to the glutamate 5-kinase family.

The protein localises to the cytoplasm. The enzyme catalyses L-glutamate + ATP = L-glutamyl 5-phosphate + ADP. Its pathway is amino-acid biosynthesis; L-proline biosynthesis; L-glutamate 5-semialdehyde from L-glutamate: step 1/2. Functionally, catalyzes the transfer of a phosphate group to glutamate to form L-glutamate 5-phosphate. This Streptomyces avermitilis (strain ATCC 31267 / DSM 46492 / JCM 5070 / NBRC 14893 / NCIMB 12804 / NRRL 8165 / MA-4680) protein is Glutamate 5-kinase.